A 1486-amino-acid chain; its full sequence is Chromosome partition protein MukB (1486 aa).

34-41 (GGNGAGKS) is an ATP binding site. Coiled-coil stretches lie at residues 326 to 418 (LEAD…QYNQ), 444 to 480 (LETFQAKELEATEKMLSLEQKMSMAQTAHSQFEQAYQ), and 509 to 603 (RHLA…RAPV). The segment at 666–783 (PGGSEDQRLN…EVPLFGRAAR (118 aa)) is flexible hinge. Coiled-coil stretches lie at residues 835 to 923 (EAEI…AKLE), 977 to 1115 (EMLS…TAKA), and 1209 to 1266 (VEAI…QNVS).

The protein belongs to the SMC family. MukB subfamily. As to quaternary structure, homodimerization via its hinge domain. Binds to DNA via its C-terminal region. Interacts, and probably forms a ternary complex, with MukE and MukF via its C-terminal region. The complex formation is stimulated by calcium or magnesium. Interacts with tubulin-related protein FtsZ.

The protein localises to the cytoplasm. It is found in the nucleoid. Its function is as follows. Plays a central role in chromosome condensation, segregation and cell cycle progression. Functions as a homodimer, which is essential for chromosome partition. Involved in negative DNA supercoiling in vivo, and by this means organize and compact chromosomes. May achieve or facilitate chromosome segregation by condensation DNA from both sides of a centrally located replisome during cell division. In Shigella flexneri serotype 5b (strain 8401), this protein is Chromosome partition protein MukB.